A 754-amino-acid chain; its full sequence is ATP-dependent zinc metalloprotease FtsH (754 aa).

The Cytoplasmic segment spans residues 1–9; sequence MKQRMKKPS. A helical membrane pass occupies residues 10-30; the sequence is LGTFILILILIGILAYVLWQF. At 31-186 the chain is on the extracellular side; that stretch reads LSPKLGYKSL…FDRPRGNFLS (156 aa). The chain crosses the membrane as a helical span at residues 187 to 207; it reads SFIVPYIPFLLISLFGFWLFF. At 208–754 the chain is on the cytoplasmic side; it reads RLSQNSQAGG…ESKIDSSKEQ (547 aa). Residue 277–284 coordinates ATP; that stretch reads GPPGTGKT. A Zn(2+)-binding site is contributed by His-499. The active site involves Glu-500. Zn(2+) is bound by residues His-503 and Asp-577. The interval 713–754 is disordered; sequence QEKSYENEDQNQNSLEAINYNIDDQDDDKNDSESKIDSSKEQ. A compositionally biased stretch (basic and acidic residues) spans 743–754; it reads DSESKIDSSKEQ.

In the central section; belongs to the AAA ATPase family. This sequence in the C-terminal section; belongs to the peptidase M41 family. In terms of assembly, homohexamer. It depends on Zn(2+) as a cofactor.

It localises to the cell membrane. Functionally, acts as a processive, ATP-dependent zinc metallopeptidase for both cytoplasmic and membrane proteins. Plays a role in the quality control of integral membrane proteins. This chain is ATP-dependent zinc metalloprotease FtsH, found in Mesomycoplasma conjunctivae (strain ATCC 25834 / NCTC 10147 / HRC/581) (Mycoplasma conjunctivae).